The sequence spans 324 residues: Elongation factor P--(R)-beta-lysine ligase (324 aa).

75 to 77 contacts substrate; sequence SPE. ATP contacts are provided by residues 99–101 and Asn-108; that span reads RNE. Residue Tyr-117 coordinates substrate. 243–244 is a binding site for ATP; the sequence is EL. Residue Glu-250 coordinates substrate. Gly-299 is a binding site for ATP.

This sequence belongs to the class-II aminoacyl-tRNA synthetase family. EpmA subfamily. In terms of assembly, homodimer.

It catalyses the reaction D-beta-lysine + L-lysyl-[protein] + ATP = N(6)-((3R)-3,6-diaminohexanoyl)-L-lysyl-[protein] + AMP + diphosphate + H(+). Its function is as follows. With EpmB is involved in the beta-lysylation step of the post-translational modification of translation elongation factor P (EF-P). Catalyzes the ATP-dependent activation of (R)-beta-lysine produced by EpmB, forming a lysyl-adenylate, from which the beta-lysyl moiety is then transferred to the epsilon-amino group of a conserved specific lysine residue in EF-P. The sequence is that of Elongation factor P--(R)-beta-lysine ligase from Pseudoalteromonas translucida (strain TAC 125).